A 125-amino-acid chain; its full sequence is Large ribosomal subunit protein bL12 (125 aa).

It belongs to the bacterial ribosomal protein bL12 family. Homodimer. Part of the ribosomal stalk of the 50S ribosomal subunit. Forms a multimeric L10(L12)X complex, where L10 forms an elongated spine to which 2 to 4 L12 dimers bind in a sequential fashion. Binds GTP-bound translation factors.

Forms part of the ribosomal stalk which helps the ribosome interact with GTP-bound translation factors. Is thus essential for accurate translation. The chain is Large ribosomal subunit protein bL12 from Bradyrhizobium sp. (strain ORS 278).